The primary structure comprises 423 residues: UPF0229 protein Pfl01_5140 (423 aa).

The disordered stretch occupies residues 83 to 108; the sequence is TAGEHIARPPGGGGGRGPGKAGNSGE. A compositionally biased stretch (gly residues) spans 92–107; the sequence is PGGGGGRGPGKAGNSG.

The protein belongs to the UPF0229 family.

The protein is UPF0229 protein Pfl01_5140 of Pseudomonas fluorescens (strain Pf0-1).